Reading from the N-terminus, the 285-residue chain is Bifunctional protein FolD (285 aa).

Residues 166–168 (GRS), Ser191, and Thr232 contribute to the NADP(+) site.

Belongs to the tetrahydrofolate dehydrogenase/cyclohydrolase family. In terms of assembly, homodimer.

It catalyses the reaction (6R)-5,10-methylene-5,6,7,8-tetrahydrofolate + NADP(+) = (6R)-5,10-methenyltetrahydrofolate + NADPH. The enzyme catalyses (6R)-5,10-methenyltetrahydrofolate + H2O = (6R)-10-formyltetrahydrofolate + H(+). The protein operates within one-carbon metabolism; tetrahydrofolate interconversion. Its function is as follows. Catalyzes the oxidation of 5,10-methylenetetrahydrofolate to 5,10-methenyltetrahydrofolate and then the hydrolysis of 5,10-methenyltetrahydrofolate to 10-formyltetrahydrofolate. The polypeptide is Bifunctional protein FolD (Chloroflexus aggregans (strain MD-66 / DSM 9485)).